The chain runs to 296 residues: 4-diphosphocytidyl-2-C-methyl-D-erythritol kinase (296 aa).

The active site involves Lys-18. 103-113 (PHGAGLGGGSS) contacts ATP. The active site involves Asp-146.

The protein belongs to the GHMP kinase family. IspE subfamily.

The catalysed reaction is 4-CDP-2-C-methyl-D-erythritol + ATP = 4-CDP-2-C-methyl-D-erythritol 2-phosphate + ADP + H(+). Its pathway is isoprenoid biosynthesis; isopentenyl diphosphate biosynthesis via DXP pathway; isopentenyl diphosphate from 1-deoxy-D-xylulose 5-phosphate: step 3/6. Its function is as follows. Catalyzes the phosphorylation of the position 2 hydroxy group of 4-diphosphocytidyl-2C-methyl-D-erythritol. This is 4-diphosphocytidyl-2-C-methyl-D-erythritol kinase from Solidesulfovibrio magneticus (strain ATCC 700980 / DSM 13731 / RS-1) (Desulfovibrio magneticus).